We begin with the raw amino-acid sequence, 156 residues long: MPRKGPVVRREIPEDPVYSSRVVSQLIGRVLLSGKKSLAQRIVYSALDKVSMKASEDPVSVLRKALDNVRPSLEVRSRRVGGSTYQVPVPVRSHRADALAIRWLTVYSRARREKSMVDRLASEILDASNGVGATVKCKEDTHRMAESNRAFAHYRW.

Belongs to the universal ribosomal protein uS7 family. In terms of assembly, part of the 30S ribosomal subunit. Contacts proteins S9 and S11.

One of the primary rRNA binding proteins, it binds directly to 16S rRNA where it nucleates assembly of the head domain of the 30S subunit. Is located at the subunit interface close to the decoding center, probably blocks exit of the E-site tRNA. This is Small ribosomal subunit protein uS7 from Tropheryma whipplei (strain TW08/27) (Whipple's bacillus).